Reading from the N-terminus, the 475-residue chain is uncharacterized protein (475 aa).

The interval 42–292 (NLQNSLTGKT…NTRKGQRHNN (251 aa)) is disordered. Composition is skewed to basic and acidic residues over residues 59–72 (EANH…KSED) and 119–134 (IAEK…DDSQ). Polar residues-rich tracts occupy residues 150 to 159 (ITPNFTHTPI) and 220 to 242 (NNTF…TSED). A compositionally biased stretch (low complexity) spans 243 to 263 (SSSQAPHHSSSSGHAPSQQGG). Over residues 277 to 289 (FHHKGRNTRKGQR) the composition is skewed to basic residues. Residues 319–408 (NPYLCDVQAF…MSIKVRRKET (90 aa)) enclose the HTH La-type RNA-binding domain. Thr408 is subject to Phosphothreonine. Ser410 is subject to Phosphoserine.

It localises to the cytoplasm. This is an uncharacterized protein from Schizosaccharomyces pombe (strain 972 / ATCC 24843) (Fission yeast).